Reading from the N-terminus, the 343-residue chain is uncharacterized protein (343 aa).

It belongs to the IIV-6 219L family.

This is an uncharacterized protein from Invertebrate iridescent virus 6 (IIV-6).